Reading from the N-terminus, the 146-residue chain is Hemoglobin subunit beta (146 aa).

Position 1 is an N-acetylvaline (Val1). Positions 2-146 constitute a Globin domain; sequence HLTAEEKSAV…VANALAHKYH (145 aa). Residue Ser44 is modified to Phosphoserine. N6-acetyllysine is present on Lys59. His63 lines the heme b pocket. Lys82 carries the post-translational modification N6-acetyllysine. His92 is a heme b binding site. An S-nitrosocysteine modification is found at Cys93. Lys144 carries the post-translational modification N6-acetyllysine.

This sequence belongs to the globin family. Heterotetramer of two alpha chains and two beta chains. Red blood cells.

Involved in oxygen transport from the lung to the various peripheral tissues. This chain is Hemoglobin subunit beta, found in Tamias merriami (Merriam's chipmunk).